Here is a 552-residue protein sequence, read N- to C-terminus: Metal transporter Nramp6.1 (552 aa).

An N-linked (GlcNAc...) asparagine glycan is attached at asparagine 11. A run of 7 helical transmembrane segments spans residues phenylalanine 55–leucine 75, glutamate 88–alanine 108, cysteine 133–phenylalanine 155, isoleucine 159–glycine 181, lysine 189–methionine 209, isoleucine 238–leucine 258, and tyrosine 275–isoleucine 295. Asparagine 306 carries N-linked (GlcNAc...) asparagine glycosylation. The next 5 membrane-spanning stretches (helical) occupy residues isoleucine 338 to glycine 358, leucine 377 to serine 397, leucine 402 to leucine 422, isoleucine 438 to tyrosine 458, and valine 478 to leucine 498. The interval proline 511–glutamate 552 is disordered. Residues asparagine 514–glutamate 523 are compositionally biased toward polar residues. Over residues methionine 535–leucine 545 the composition is skewed to basic and acidic residues.

Belongs to the NRAMP (TC 2.A.55) family.

It localises to the membrane. Functionally, probable divalent metal transporter. This Populus trichocarpa (Western balsam poplar) protein is Metal transporter Nramp6.1.